The sequence spans 277 residues: Urease accessory protein UreD (277 aa).

The protein belongs to the UreD family. UreD, UreF and UreG form a complex that acts as a GTP-hydrolysis-dependent molecular chaperone, activating the urease apoprotein by helping to assemble the nickel containing metallocenter of UreC. The UreE protein probably delivers the nickel.

It localises to the cytoplasm. Its function is as follows. Required for maturation of urease via the functional incorporation of the urease nickel metallocenter. This chain is Urease accessory protein UreD, found in Rhodopseudomonas palustris (strain BisB18).